The following is a 579-amino-acid chain: Folliculin (579 aa).

The disordered stretch occupies residues 32 to 82; sequence GAGSGDGAGRGEPADEEEGGIQMSSRIRAHSPAEGASAESSSPGPKKSDMC. S62 and S73 each carry phosphoserine. The span at 63–76 shows a compositional bias: low complexity; that stretch reads PAEGASAESSSPGP. Positions 86–242 constitute a uDENN FLCN/SMCR8-type domain; the sequence is RSLAAGHPGY…RNGNAARSLT (157 aa). Positions 285–309 form a coiled coil; it reads QMEQLAELEEESESWDNSEAEEEEK. Positions 294-308 are enriched in acidic residues; it reads EESESWDNSEAEEEE. Residues 294–321 are disordered; it reads EESESWDNSEAEEEEKGPALPEGAEGRE. Residues S302, S406, S537, S542, and S571 each carry the phosphoserine modification. Residues 339–491 form the cDENN FLCN/SMCR8-type domain; that stretch reads QPRKLSVFKS…ILNKMEAALT (153 aa). The 66-residue stretch at 493-558 folds into the dDENN FLCN/SMCR8-type domain; it reads QNLSVDVVDQ…LLKFWMTGLS (66 aa).

This sequence belongs to the folliculin family. Interacts (via C-terminus) with FNIP1 or FNIP2 (via C-terminus). Component of the lysosomal folliculin complex (LFC), composed of FLCN, FNIP1 (or FNIP2), RagA/RRAGA or RagB/RRAGB GDP-bound, RagC/RRAGC or RagD/RRAGD GTP-bound, and Ragulator. Interaction with FNIP1 or FNIP2 mediates indirect interaction with the PRKAA1, PRKAB1 and PRKAG1 subunits of 5'-AMP-activated protein kinase (AMPK). Interacts with HSP90AA1 in the presence of FNIP1. Interacts with HSP70, STUB1, CDC37, AHSA1, CCT2, STIP1, PTGES3 and PPP5C. Interacts with GABARAP; interaction takes place in the presence of FNIP1 and/or FNIP2. Interacts with RILP; the interaction is direct and promotes association between RILP and RAB34. Interacts with KIF3A and KIF3B. Interacts with lactate dehydrogenase LDHA, but not LDHB; the interaction is direct, may preferentially bind LDHA dimers rather than tetramers, and regulates LDHA activity, acting as an uncompetitive inhibitor. In terms of processing, phosphorylation by ULK1 modulates the interaction with GABARAP and is required to regulate autophagy.

The protein resides in the lysosome membrane. It is found in the cytoplasm. The protein localises to the cytosol. Its subcellular location is the cell projection. It localises to the cilium. The protein resides in the cytoskeleton. It is found in the microtubule organizing center. The protein localises to the centrosome. Its subcellular location is the spindle. It localises to the nucleus. GTPase-activating activity is inhibited in the folliculin complex (LFC), which stabilizes the GDP-bound state of RagA/RRAGA (or RagB/RRAGB), because Arg-164 is located far from the RagC/RRAGC or RagD/RRAGD nucleotide pocket. Disassembly of the LFC complex upon amino acid restimulation liberates the GTPase-activating activity. Its function is as follows. Multi-functional protein, involved in both the cellular response to amino acid availability and in the regulation of glycolysis. GTPase-activating protein that plays a key role in the cellular response to amino acid availability through regulation of the non-canonical mTORC1 signaling cascade controlling the MiT/TFE factors TFEB and TFE3. Activates mTORC1 by acting as a GTPase-activating protein: specifically stimulates GTP hydrolysis by RagC/RRAGC or RagD/RRAGD, promoting the conversion to the GDP-bound state of RagC/RRAGC or RagD/RRAGD, and thereby activating the kinase activity of mTORC1. The GTPase-activating activity is inhibited during starvation and activated in presence of nutrients. Acts as a key component for non-canonical mTORC1-dependent control of the MiT/TFE factors TFEB and TFE3, while it is not involved in mTORC1-dependent phosphorylation of canonical RPS6KB1/S6K1 and EIF4EBP1/4E-BP1. In low-amino acid conditions, the lysosomal folliculin complex (LFC) is formed on the membrane of lysosomes, which inhibits the GTPase-activating activity of FLCN, inactivates mTORC1 and maximizes nuclear translocation of TFEB and TFE3. Upon amino acid restimulation, RagA/RRAGA (or RagB/RRAGB) nucleotide exchange promotes disassembly of the LFC complex and liberates the GTPase-activating activity of FLCN, leading to activation of mTORC1 and subsequent cytoplasmic retention of TFEB and TFE3. Indirectly acts as a positive regulator of Wnt signaling by promoting mTOR-dependent cytoplasmic retention of MiT/TFE factor TFE3. Required for the exit of hematopoietic stem cell from pluripotency by promoting mTOR-dependent cytoplasmic retention of TFE3, thereby increasing Wnt signaling. Involved in the control of embryonic stem cells differentiation; together with LAMTOR1 it is necessary to recruit and activate RagC/RRAGC and RagD/RRAGD at the lysosomes, and to induce exit of embryonic stem cells from pluripotency via non-canonical, mTOR-independent TFE3 inactivation. Acts as an inhibitor of browning of adipose tissue by regulating mTOR-dependent cytoplasmic retention of TFE3. In response to flow stress, regulates STK11/LKB1 accumulation and mTORC1 activation through primary cilia: may act by recruiting STK11/LKB1 to primary cilia for activation of AMPK resided at basal bodies, causing mTORC1 down-regulation. Together with FNIP1 and/or FNIP2, regulates autophagy: following phosphorylation by ULK1, interacts with GABARAP and promotes autophagy. Required for starvation-induced perinuclear clustering of lysosomes by promoting association of RILP with its effector RAB34. Regulates glycolysis by binding to lactate dehydrogenase LDHA, acting as an uncompetitive inhibitor. This Bos taurus (Bovine) protein is Folliculin.